Reading from the N-terminus, the 603-residue chain is Prosaposin receptor GPR37 (603 aa).

The first 26 residues, 1–26 (MPAPGAPLSRTSRLLLLLLFKVSVSA), serve as a signal peptide directing secretion. At 27–255 (ALSFVPEPRN…QESYGAYAVM (229 aa)) the chain is on the extracellular side. N-linked (GlcNAc...) asparagine glycosylation is present at asparagine 36. The interval 39-232 (CLGESCSPLI…GGPRRGNSTN (194 aa)) is disordered. Basic and acidic residues-rich tracts occupy residues 51–79 (RSRD…EAEV), 145–158 (TSER…RDEI), and 165–175 (HSVKTEPEPRD). N-linked (GlcNAc...) asparagine glycans are attached at residues asparagine 212 and asparagine 229. The helical transmembrane segment at 256–276 (CLSVVIFGTGIIGNLAVMCIV) threads the bilayer. Topologically, residues 277 to 289 (CHNYYMRSISNSL) are cytoplasmic. The helical transmembrane segment at 290 to 310 (LANLAFWDFLIIFFCLPLVIF) threads the bilayer. Residues 311–325 (HELTKKWLLEDFSCK) lie on the Extracellular side of the membrane. The cysteines at positions 324 and 409 are disulfide-linked. The helical transmembrane segment at 326–346 (IVPYIEVASLGVTTFTLCALC) threads the bilayer. The Cytoplasmic portion of the chain corresponds to 347 to 369 (IDRFRAATNVQMYYEMIENCSST). A helical transmembrane segment spans residues 370–390 (TAKLAVIWVGALLLALPEVVL). Residues 391–433 (RQLSKEDLGFSGQAPAERCVIKISPDLPDTIYVLALTYDGARL) are Extracellular-facing. The chain crosses the membrane as a helical span at residues 434–454 (WWYFGCYFCLPTLFTITCSLV). Over 455-483 (TARKIRKAEKASTRGNKRQIHLESQMNCT) the chain is Cytoplasmic. A helical transmembrane segment spans residues 484–504 (VVALTILYGFCIIPENICNIV). The Extracellular portion of the chain corresponds to 505-521 (TAYMATGVSQQTMDLLN). A helical membrane pass occupies residues 522 to 542 (IISQFLLFFKSCVTPVLLFCL). Residues 543-603 (CRPFSRAFME…STFASVGTHC (61 aa)) are Cytoplasmic-facing.

Belongs to the G-protein coupled receptor 1 family. In terms of assembly, forms a complex with PRKN, STUB1 and HSP70. The amount of STUB1 in the complex increases during ER stress. STUB1 promotes the dissociation of HSP70 from PRKN, thus facilitating PRKN-mediated GPR37 ubiquitination. Interacts with PACRG. The N-terminus is cleaved by ADAM10 metalloproteinase; mediating limited proteolysis leading to the release of receptor ectodomain by shedding. In addition, cleaved by FURIN between Arg-53 and Asp-54. Post-translationally, ubiquitinated by PRKN in the presence of UBE2E1 and UBE2L3 in the endoplasmic reticulum. The unfolded form is specifically ubiquitinated by SYVN1, which promotes its proteasomal degradation and prevents neuronal cell death. Highly expressed in the brain. High levels of expression were seen in fiber tracts such as the corpus callosum, anterior commissure, fornix, internal capsule, cerebral peduncles, and stria terminalis. Additionally, moderate levels of expression were seen in the pyramidal tracts and cerebellar peduncles, as well as in the spinal tract of the trigeminal nerve and the spinal fasciculi.

The protein resides in the cell projection. It is found in the dendrite. It localises to the synapse. Its subcellular location is the cell membrane. The protein localises to the endoplasmic reticulum membrane. Functionally, G-protein-coupled receptor that plays a role in several physiological pathways such as resolution of inflammatory pain and oligodendrocyte differentiation. Acts as a receptor for several ligands including prosaposin, osteocalcin or neuroprotectin D1. Ligand binding induces endocytosis, followed by an ERK phosphorylation cascade. Acts as a receptor for osteocalcin (OCN) to regulate oligodendrocyte differentiation and central nervous system myelination. Mechanistically, plays a negative role in oligodendrocyte differentiation and myelination during development via activation of the ERK1/2 signaling pathway. Therefore, regulates the stability of myelin or resistance of myelin itself to demyelination. Upon activation by neuroprotectin D1 (NPD1), promotes the activation of phagocytosis in macrophages as well as the shift in cytokine release toward an anti-inflammatory profile, and thus helps to reverse inflammatory pain. In addition, the increased macrophage phagocytosis mediates protection against sepsis upon pathogen infection. Additionally, extracellular vesicles derived from efferocyte express prosaposin, which binds to macrophage GPR37 to increase expression of the efferocytosis receptor TIM4 via an ERK-AP1-dependent signaling axis, leading to increased macrophage efferocytosis efficiency and accelerated resolution of inflammation. May also act as a maturation factor of LRP6, protecting LRP6 from the endoplasmic reticulum (ER)-associated protein degradation (ERAD) and thereby promoting the Wnt/beta-catenin signaling pathway. This is Prosaposin receptor GPR37 (Gpr37) from Rattus norvegicus (Rat).